The sequence spans 465 residues: Ribulose bisphosphate carboxylase large chain (465 aa).

Position 4 is an N6,N6,N6-trimethyllysine (Lys4). Positions 113 and 163 each coordinate substrate. Lys165 functions as the Proton acceptor in the catalytic mechanism. Lys167 contributes to the substrate binding site. Lys191, Asp193, and Glu194 together coordinate Mg(2+). Lys191 is subject to N6-carboxylysine. The Proton acceptor role is filled by His284. 3 residues coordinate substrate: Arg285, His317, and Ser369.

It belongs to the RuBisCO large chain family. Type I subfamily. In terms of assembly, heterohexadecamer of 8 large chains and 8 small chains; disulfide-linked. The disulfide link is formed within the large subunit homodimers. The cofactor is Mg(2+). The disulfide bond which can form in the large chain dimeric partners within the hexadecamer appears to be associated with oxidative stress and protein turnover.

Its subcellular location is the plastid. It is found in the chloroplast. It carries out the reaction 2 (2R)-3-phosphoglycerate + 2 H(+) = D-ribulose 1,5-bisphosphate + CO2 + H2O. It catalyses the reaction D-ribulose 1,5-bisphosphate + O2 = 2-phosphoglycolate + (2R)-3-phosphoglycerate + 2 H(+). Functionally, ruBisCO catalyzes two reactions: the carboxylation of D-ribulose 1,5-bisphosphate, the primary event in carbon dioxide fixation, as well as the oxidative fragmentation of the pentose substrate in the photorespiration process. Both reactions occur simultaneously and in competition at the same active site. The chain is Ribulose bisphosphate carboxylase large chain from Combretum indicum (Rangoon creeper).